The following is a 261-amino-acid chain: Ribosomal RNA small subunit methyltransferase J (261 aa).

Residues 111–112, 127–128, 163–164, and Asp-181 each bind S-adenosyl-L-methionine; these read RD, ER, and SS.

Belongs to the methyltransferase superfamily. RsmJ family.

The protein resides in the cytoplasm. The catalysed reaction is guanosine(1516) in 16S rRNA + S-adenosyl-L-methionine = N(2)-methylguanosine(1516) in 16S rRNA + S-adenosyl-L-homocysteine + H(+). Functionally, specifically methylates the guanosine in position 1516 of 16S rRNA. The sequence is that of Ribosomal RNA small subunit methyltransferase J from Shewanella sp. (strain MR-4).